The following is a 20-amino-acid chain: TDSIKETIKETVNHQAEWPY.

Basic and acidic residues predominate over residues 1–12 (TDSIKETIKETV). The segment at 1–20 (TDSIKETIKETVNHQAEWPY) is disordered.

The protein is 21 kDa cold shock-induced protein of Streptococcus thermophilus.